The sequence spans 682 residues: Amphiphysin (682 aa).

Coiled coils occupy residues 10-84 and 144-191; these read AKNV…LHEV and DYDS…QEEL. The 217-residue stretch at 24-240 folds into the BAR domain; it reads VLQKLGKADE…MTKLGDQHAD (217 aa). 4 disordered regions span residues 244 to 310, 446 to 470, 501 to 530, and 561 to 606; these read TIQG…PKLT, ILAE…ETTG, GAVR…QEKV, and AAAE…ASDM. Over residues 261 to 274 the composition is skewed to pro residues; it reads PSPPEEVSPLPSPT. A compositionally biased stretch (basic and acidic residues) spans 503–527; the sequence is VRTEQEAAAEGDKPQGEEKDVDVSQ. Residues 567 to 596 show a composition bias toward polar residues; that stretch reads TQGTDSETSQIGSEQKATEEIQTTPSQDQP. The region spanning 609-682 is the SH3 domain; sequence GFLFKVEVLH…FPENFTRHLE (74 aa).

As to quaternary structure, heterodimer with BIN1. Binds SH3GLB1. Is abundant in the forebrain and cerebellum. It is also found in the adrenal gland, anterior and posterior pituitary.

It localises to the cytoplasmic vesicle. The protein localises to the secretory vesicle. Its subcellular location is the synaptic vesicle membrane. The protein resides in the cytoplasm. It is found in the cytoskeleton. Functionally, may participate in mechanisms of regulated exocytosis in synapses and certain endocrine cell types. May control the properties of the membrane associated cytoskeleton. This chain is Amphiphysin (AMPH), found in Gallus gallus (Chicken).